A 630-amino-acid chain; its full sequence is Triacylglycerol lipase ptl2 (630 aa).

Positions 251-442 constitute a PNPLA domain; that stretch reads LCLSGGASFA…RTDIPLSELR (192 aa). The GXSXG signature appears at 282–286; that stretch reads GTSGG. Ser-284 functions as the Nucleophile in the catalytic mechanism. Catalysis depends on Asp-429, which acts as the Proton acceptor.

The protein belongs to the PLPL family.

The protein resides in the lipid droplet. It catalyses the reaction a triacylglycerol + H2O = a diacylglycerol + a fatty acid + H(+). Its function is as follows. Lipid particle-localized triacylglycerol (TAG) lipase. The lipid droplet/particle is a lipid storage compartment which serves as a depot of energy and building blocks for membrane lipid biosynthesis. Involved in the mobilization of the non-polar storage lipids triacylglycerols (TAGs) from lipid particles by hydrolysis of TAGs, releasing and supplying specific fatty acids to the appropriate metabolic pathways. This Schizosaccharomyces pombe (strain 972 / ATCC 24843) (Fission yeast) protein is Triacylglycerol lipase ptl2 (ptl2).